A 506-amino-acid chain; its full sequence is Maturase K (506 aa).

The protein belongs to the intron maturase 2 family. MatK subfamily.

It is found in the plastid. The protein resides in the chloroplast. Functionally, usually encoded in the trnK tRNA gene intron. Probably assists in splicing its own and other chloroplast group II introns. The sequence is that of Maturase K from Melilotus indicus (Sourclover).